Consider the following 364-residue polypeptide: Trans-enoyl reductase traG (364 aa).

NADP(+) is bound at residue 51–54 (VDAK). 136–143 (LGLFTAGL) serves as a coordination point for substrate. NADP(+) contacts are provided by residues 176–179 (STAT), 199–202 (SKAN), Y217, and 264–265 (LE). Position 286 to 290 (286 to 290 (ALTVF)) interacts with substrate. 355-356 (MS) provides a ligand contact to NADP(+).

It belongs to the zinc-containing alcohol dehydrogenase family. In terms of assembly, monomer.

The protein operates within secondary metabolite biosynthesis. Functionally, trans-enoyl reductase; part of the tra gene cluster that produces terrestric acid. The clavatol biosynthesis cluster cla and the terrestric acid cluster tra are both involved in the production of peniphenones and penilactones. The non-reducing PKS claF is responsible for the formation of clavatol from successive condensations of 3 malonyl-CoA units, presumably with a simple acetyl-CoA starter unit, and 2 methylation steps. The esterase claE probably collaborates with claF by catalyzing the hydrolysis of ACP-bound acyl intermediates to free the ACP from stalled intermediates. The clavatol oxidase claD then converts clavatol to hydroxyclavatol. Spontaneous dehydration of hydroxyclavatol leads to the accumulation of the highly active ortho-quinone methide. On the other hand, the PKS-NRPS hybrid traA is involved in the formation of crustosic acid, with the help of traB and traD. The polyketide synthase module (PKS) of traA is responsible for the synthesis of the polyketide backbone via the condensation of an acetyl-CoA starter unit with 3 malonyl-CoA units. The downstream nonribosomal peptide synthetase (NRPS) module then amidates the carboxyl end of the polyketide with L-malic acid. Because traA lacks a designated enoylreductase (ER) domain, the required activity is provided the enoyl reductase traG. Crustosic acid undergoes decarboxylation and isomerization to the terrestric acid, catalyzed by the 2-oxoglutarate-dependent dioxygenase traH. Both acids are further converted to the 2 gamma-butyrolactones (R)-5-methyltetronic acid and (S)-5-carboxylmethyltetronic acid, with involvement of the cytochrome P450 monooxygenase claJ. Spontaneous addition of the methide to these gamma-butyrolactones leads to peniphenone D and penilactone D, which undergo again stereospecific attacking by methide to give penilactones A and B. In Penicillium crustosum (Blue mold fungus), this protein is Trans-enoyl reductase traG.